The chain runs to 351 residues: Photosystem II D2 protein (351 aa).

The helical transmembrane segment at 39–59 (CAYLAVGGWLTGTTFVTSWYT) threads the bilayer. Residue H116 coordinates chlorophyll a. The helical transmembrane segment at 123–139 (GFCLRQFEIARLVGLRP) threads the bilayer. Pheophytin a-binding residues include Q128 and N141. The helical transmembrane segment at 151–164 (VFVSVFLMYPLGQA) threads the bilayer. Residue H196 participates in chlorophyll a binding. The chain crosses the membrane as a helical span at residues 206-226 (GALLCAIHGATVQNTLFEDGD). A plastoquinone-binding residues include H213 and F260. Residue H213 participates in Fe cation binding. H267 is a Fe cation binding site. Residues 277–293 (GLWTSAFGIVGLALNLR) traverse the membrane as a helical segment.

It belongs to the reaction center PufL/M/PsbA/D family. As to quaternary structure, PSII is composed of 1 copy each of membrane proteins PsbA, PsbB, PsbC, PsbD, PsbE, PsbF, PsbH, PsbI, PsbJ, PsbK, PsbL, PsbM, PsbT, PsbX, PsbY, PsbZ, Psb30/Ycf12, at least 3 peripheral proteins of the oxygen-evolving complex and a large number of cofactors. It forms dimeric complexes. Requires The D1/D2 heterodimer binds P680, chlorophylls that are the primary electron donor of PSII, and subsequent electron acceptors. It shares a non-heme iron and each subunit binds pheophytin, quinone, additional chlorophylls, carotenoids and lipids. There is also a Cl(-1) ion associated with D1 and D2, which is required for oxygen evolution. The PSII complex binds additional chlorophylls, carotenoids and specific lipids. as cofactor.

Its subcellular location is the plastid. The protein localises to the chloroplast thylakoid membrane. The enzyme catalyses 2 a plastoquinone + 4 hnu + 2 H2O = 2 a plastoquinol + O2. Photosystem II (PSII) is a light-driven water:plastoquinone oxidoreductase that uses light energy to abstract electrons from H(2)O, generating O(2) and a proton gradient subsequently used for ATP formation. It consists of a core antenna complex that captures photons, and an electron transfer chain that converts photonic excitation into a charge separation. The D1/D2 (PsbA/PsbD) reaction center heterodimer binds P680, the primary electron donor of PSII as well as several subsequent electron acceptors. D2 is needed for assembly of a stable PSII complex. This Pyropia yezoensis (Susabi-nori) protein is Photosystem II D2 protein.